The primary structure comprises 516 residues: uncharacterized protein (516 aa).

The disordered stretch occupies residues 1-35; sequence MAERTSESSSESASFDLEKQQSNHHDRYQSSVSSE. A compositionally biased stretch (basic and acidic residues) spans 16–28; it reads DLEKQQSNHHDRY. S31 bears the Phosphoserine mark. The next 12 helical transmembrane spans lie at 77 to 97, 111 to 131, 143 to 163, 166 to 186, 198 to 218, 231 to 251, 301 to 321, 345 to 365, 386 to 406, 412 to 432, 439 to 461, and 481 to 501; these read VAVM…FSGA, VALL…VVWA, MIIA…AKDI, VMIC…TVAG, GLVI…SPIV, WTSY…IIFH, LLIF…VYGI, SLPY…VALF, LPSM…LAWT, IHWI…ITIF, IIDC…RSSF, and AGSL…MLFL.

It belongs to the major facilitator superfamily.

It localises to the membrane. This is an uncharacterized protein from Schizosaccharomyces pombe (strain 972 / ATCC 24843) (Fission yeast).